A 479-amino-acid chain; its full sequence is Glutamate--tRNA ligase (479 aa).

Positions 21–31 (PSPTGYLHVGG) match the 'HIGH' region motif. The 'KMSKS' region signature appears at 248-252 (KLSKR). Residue Lys-251 coordinates ATP.

Belongs to the class-I aminoacyl-tRNA synthetase family. Glutamate--tRNA ligase type 1 subfamily. As to quaternary structure, monomer.

It localises to the cytoplasm. The catalysed reaction is tRNA(Glu) + L-glutamate + ATP = L-glutamyl-tRNA(Glu) + AMP + diphosphate. Catalyzes the attachment of glutamate to tRNA(Glu) in a two-step reaction: glutamate is first activated by ATP to form Glu-AMP and then transferred to the acceptor end of tRNA(Glu). The sequence is that of Glutamate--tRNA ligase from Haemophilus ducreyi (strain 35000HP / ATCC 700724).